Consider the following 283-residue polypeptide: Thymidylate synthase (283 aa).

Arg-22 serves as a coordination point for dUMP. Cys-160 (nucleophile) is an active-site residue. Residues 180–183, Asn-191, and 221–223 each bind dUMP; these read RSCD and HIY. (6R)-5,10-methylene-5,6,7,8-tetrahydrofolate is bound at residue Asp-183. Ala-282 lines the (6R)-5,10-methylene-5,6,7,8-tetrahydrofolate pocket.

This sequence belongs to the thymidylate synthase family. Bacterial-type ThyA subfamily. In terms of assembly, homodimer.

The protein localises to the cytoplasm. The catalysed reaction is dUMP + (6R)-5,10-methylene-5,6,7,8-tetrahydrofolate = 7,8-dihydrofolate + dTMP. The protein operates within pyrimidine metabolism; dTTP biosynthesis. Catalyzes the reductive methylation of 2'-deoxyuridine-5'-monophosphate (dUMP) to 2'-deoxythymidine-5'-monophosphate (dTMP) while utilizing 5,10-methylenetetrahydrofolate (mTHF) as the methyl donor and reductant in the reaction, yielding dihydrofolate (DHF) as a by-product. This enzymatic reaction provides an intracellular de novo source of dTMP, an essential precursor for DNA biosynthesis. The polypeptide is Thymidylate synthase (Idiomarina loihiensis (strain ATCC BAA-735 / DSM 15497 / L2-TR)).